Reading from the N-terminus, the 1131-residue chain is Phytochrome B1 (1131 aa).

The segment covering 1-11 has biased composition (basic residues); the sequence is MASGSRTKHSY. Positions 1-26 are disordered; the sequence is MASGSRTKHSYHNSSQGQAQSSGTSN. Positions 14 to 25 are enriched in low complexity; that stretch reads SSQGQAQSSGTS. A GAF domain is found at 229–408; that stretch reads DIKLLCDTVV…AFGLQLNMEL (180 aa). Phytochromobilin is bound at residue cysteine 334. PAS domains are found at residues 622–693 and 756–808; these read VARE…LRGV and DYKA…GEIF. In terms of domain architecture, Histidine kinase spans 904–1124; it reads YICQEVKSPL…MIILDLPMTR (221 aa).

It belongs to the phytochrome family. As to quaternary structure, homodimer. In terms of processing, contains one covalently linked phytochromobilin chromophore.

Regulatory photoreceptor which exists in two forms that are reversibly interconvertible by light: the Pr form that absorbs maximally in the red region of the spectrum and the Pfr form that absorbs maximally in the far-red region. Photoconversion of Pr to Pfr induces an array of morphogenic responses, whereas reconversion of Pfr to Pr cancels the induction of those responses. Pfr controls the expression of a number of nuclear genes including those encoding the small subunit of ribulose-bisphosphate carboxylase, chlorophyll A/B binding protein, protochlorophyllide reductase, rRNA, etc. It also controls the expression of its own gene(s) in a negative feedback fashion. This is Phytochrome B1 from Solanum lycopersicum (Tomato).